A 420-amino-acid polypeptide reads, in one-letter code: Ketoreductase sphF (420 aa).

The disordered stretch occupies residues 1 to 21 (MLERPSFPRLGAGTRHHRPLG). Residues 29-49 (WLLAFTGISGIAGMMIPYVPW) form a helical membrane-spanning segment. The disordered stretch occupies residues 275–298 (RQKRSPSPGRHPALGSPPAQLRQD).

It localises to the membrane. It carries out the reaction 3-oxopresphingofungin + NADPH + 2 H(+) = presphingofungin + NADP(+). It functions in the pathway secondary metabolite biosynthesis. Ketoreductase; part of the gene cluster that mediates the biosynthesis of sphingofungins, bioactive molecules acting as sphingolipid inhibitors via inhibiting serine palmitoyl transferase (SPT). Within the pathway, sphF catalyzes the reduction of the C-3 ketone of 3-keto-presphingofungin to produce presphingofungin. Sphingofungin biosynthesis starts with the PKS sphB that produces an C18 polyketide precursor 3-hydroxyoctadeca-4,10-dienoyl-ACP containing one delta-6 desaturation and one delta-12 desaturation. The aminoacyl transferase sphA uses the sphB product to produce 3-keto-presphingofungin by adding an aminomalonate molecule. SphF then reduces the C-3 ketone of 3-keto-presphingofungin which leads to presphingofungin. The cytochrome P450 monooxygenase sphH converts presphingofungin into sphingofungin B1 which is further converted to sphingofungin B by the dioxygenase sphC. SphC is also able to convert presphingofungin into sphingofungin B2. The acetyltransferase sphE acetylates sphingofungin B to produce sphingofungin C, but can also convert sphingofungin B1 into sphingofungin C1 and sphingofungin B2 into sphingofungin C2. Finally, sphingofungin C can be spontaneously converted into sphingofungin D. The chain is Ketoreductase sphF from Aspergillus fumigatus (strain CBS 144.89 / FGSC A1163 / CEA10) (Neosartorya fumigata).